The sequence spans 198 residues: Putative manganese efflux pump MntP (198 aa).

Helical transmembrane passes span Ser3–Cys23, Val37–Leu57, Ile65–Ile85, Ser105–Leu127, Ile131–Gly153, and Ile171–Phe191.

Belongs to the MntP (TC 9.B.29) family.

The protein resides in the cell membrane. Probably functions as a manganese efflux pump. This chain is Putative manganese efflux pump MntP, found in Acetivibrio thermocellus (strain ATCC 27405 / DSM 1237 / JCM 9322 / NBRC 103400 / NCIMB 10682 / NRRL B-4536 / VPI 7372) (Clostridium thermocellum).